Reading from the N-terminus, the 1796-residue chain is MATSLAAQLAQIAAKSRSSLNVKAQKAAHTKSLIFEPRIAAGQSYQTIYTACRDGFEELCQLDARFTPFSNTLFSEQSQDEDRSQMTQAENKELDRRVDSFLRLVGSRLRLMPAIKAIEWLIRRFRIHEFNTSTLLATFLPYHSIPAFVTLLSILPADLPQQYKFLAPYVRSLTAPPRAAIVYQATHHREFLTAITEYTLDACRNKQQYPALVSFWAGVMTEAVNGRIDINRSGRQGVQLDNDLALIALVSKPLGDAMTMKDVPDIQIAAYMVVSLLAAKANFDDKLLSVFMEQLVIGWTAETVRPGLVCLSILAQYRAPKQLSSRVAKALLKMDDLPQRLVDASKQCRVDKLAYALVLALADRLAKKGDARGLPIIKSILLLELLQEKLGKVAFKSLLRAALKMTDEVDQDGSARKQLGSTLVLLSQSAGATGVMVRQVIEDEDYDIEGLELRLDTSFGPRRLLEDKPAEEDAKDLEVRQDPKETLEAAIERLAVPPRSVKSFLSQKSDQLFDDMCKVLLSVATDPDDLLKFDEAPFLCRQTAHDDSYYFSFYMRVWCGPYPTLIRSAALEMAKRRLKQGDCAALDLQAMIPYCVAALSDPAKKVRQAAADLITVLSKSNAEGIETAKRPIWASKQLYEQSNEQTWMNPAASRALLQEIIVPALEESVLDEEHISNVLRSHLQSTKDSATGPQLSSAVRLSIFSCITSHVVHTPLLAVKSRLLKPTNQVDSVSKATRTSLLLPLLRWWASLSSTEAAQLCERERIDESKFNQSCVNVAVANDKPGLETLFEIITNSSAWTREGLVEAAFARTRKIWSTIKSDSKLKLALSMLDLAQTPATAGSSAEFVSEEAADFLRNVDLTTNILNAFLESLQDIPKITTDSPATKRRRTSSSDHSRGVSLQATNAVKAALNKVTFVLQLVEGSKPAEHPELLQSLFVTLADLQVLRSQVGSELGYLQNLVLSSLLAMMPTYKNNKSLKIDTSVGHGDVLVQCIQKSSSPAVQNSALLLVASLANTAPDVVLHSVMPIFTFMGGSVLRQSDDYSAHVVVQTIKEVIPPLVETFRKSRRNLVTSAAELLSSFVIAYEHIPSHRKRDMFISLIENLGPKDFLAALVAMFVDKYGTTDSMVAFCKDLMNSFGVEVQLQSLVMLLDLVSDCLQPKPTLAATLFNRNTDDDQDLHKTALKELTLLPKVLSSRQLRTEVSQLAGRDDMEASKFRELYASLLEKILTLAETVKTNKALHARCSDTLAGLLNLLSIGEFIKAVENLLDRPSISLRQKVLRTLEVRVDQESNTDADSRTVLLAFLPQLTAVIRDSDDIAYKHTAVACVDKIAEKYGKKDLEAVAAAATTIAGDCCLGQPDKRLRVMALLCLASLVDVLQDGIVPTLPVSLPKALSYLSESLQGEKEPELHNAVYSFFESLAVHVPYMLTKTYIGQLLAVSNVSAEANMSDESSQARFGCLQLLANQVDANTMLAALEQNWAQAVNAGFSAVEEYLKLLATVLDKHPSTIIAKHISTLSTIFLSALDLRRNVQSKDTVSIAALAKLTEIEALINDVALKMIYKLNDSKFRTVFTQLMEWVATGLPKDDKLGKVLRHQSVYSFLLAFFDNLKDVVASYASYIIDDATAILKASDPSKMEDRELWQLVLKTLARCFEHDSGGFWQVPAHFEAVSGLLVEQLEHAAALGELPGGDLVQNAVVGLAEAAASRDHRKELNAAVLRRLRSPSASVRLAAVRCEQSLTDTLGEDWLEMLSEMLPYISELQDDDDEDVEKETHRWITKIEAILGESLDAMLQ.

12 HEAT repeats span residues 586 to 623 (LDLQ…SNAE), 656 to 692 (LLQE…SATG), 861 to 898 (DLTT…SDHS), 983 to 1021 (DTSV…TAPD), 1052 to 1089 (QTIK…AYEH), 1161 to 1198 (QPKP…VLSS), 1258 to 1295 (LSIG…QESN), 1302 to 1340 (TVLL…KYGK), 1344 to 1383 (EAVA…VLQD), 1492 to 1529 (SAVE…SALD), 1711 to 1748 (DHRK…TLGE), and 1752 to 1789 (EMLS…ILGE). The interval 881 to 901 (TTDSPATKRRRTSSSDHSRGV) is disordered.

Belongs to the HEATR1/UTP10 family. Component of the ribosomal small subunit (SSU) processome.

The protein localises to the nucleus. Its subcellular location is the nucleolus. Involved in nucleolar processing of pre-18S ribosomal RNA. Involved in ribosome biosynthesis. This is U3 small nucleolar RNA-associated protein 10 from Pyricularia oryzae (strain 70-15 / ATCC MYA-4617 / FGSC 8958) (Rice blast fungus).